Reading from the N-terminus, the 600-residue chain is Aspartate--tRNA(Asp/Asn) ligase (600 aa).

Glu174 lines the L-aspartate pocket. The tract at residues 198 to 201 is aspartate; the sequence is QLFK. Residue Arg220 coordinates L-aspartate. Residues 220–222 and Gln229 each bind ATP; that span reads RDE. His457 lines the L-aspartate pocket. Residue Glu491 participates in ATP binding. An L-aspartate-binding site is contributed by Arg498. Residue 543 to 546 participates in ATP binding; the sequence is GLDR.

The protein belongs to the class-II aminoacyl-tRNA synthetase family. Type 1 subfamily. Homodimer.

Its subcellular location is the cytoplasm. The catalysed reaction is tRNA(Asx) + L-aspartate + ATP = L-aspartyl-tRNA(Asx) + AMP + diphosphate. Aspartyl-tRNA synthetase with relaxed tRNA specificity since it is able to aspartylate not only its cognate tRNA(Asp) but also tRNA(Asn). Reaction proceeds in two steps: L-aspartate is first activated by ATP to form Asp-AMP and then transferred to the acceptor end of tRNA(Asp/Asn). This Burkholderia orbicola (strain MC0-3) protein is Aspartate--tRNA(Asp/Asn) ligase.